The following is a 784-amino-acid chain: Endonuclease MutS2 (784 aa).

335-342 (GPNTGGKT) is a binding site for ATP. A disordered region spans residues 527–546 (ERSKKQAEEDEARAHSAREE). A Smr domain is found at 709 to 784 (LDLRGERYED…GTGVTVVELK (76 aa)).

This sequence belongs to the DNA mismatch repair MutS family. MutS2 subfamily. Homodimer. Binds to stalled ribosomes, contacting rRNA.

Functionally, endonuclease that is involved in the suppression of homologous recombination and thus may have a key role in the control of bacterial genetic diversity. Acts as a ribosome collision sensor, splitting the ribosome into its 2 subunits. Detects stalled/collided 70S ribosomes which it binds and splits by an ATP-hydrolysis driven conformational change. Acts upstream of the ribosome quality control system (RQC), a ribosome-associated complex that mediates the extraction of incompletely synthesized nascent chains from stalled ribosomes and their subsequent degradation. Probably generates substrates for RQC. The sequence is that of Endonuclease MutS2 from Geobacillus thermodenitrificans (strain NG80-2).